The sequence spans 101 residues: Small ribosomal subunit protein bS18c (101 aa).

Basic residues predominate over residues 1–19 (MDKSKRPFRKSKRSFRRRL). 2 disordered regions span residues 1-23 (MDKS…PPIG) and 82-101 (KQFE…TRNK).

This sequence belongs to the bacterial ribosomal protein bS18 family. In terms of assembly, part of the 30S ribosomal subunit.

The protein localises to the plastid. Its subcellular location is the chloroplast. This Drimys granadensis protein is Small ribosomal subunit protein bS18c.